A 117-amino-acid polypeptide reads, in one-letter code: uncharacterized protein (117 aa).

This is an uncharacterized protein from Escherichia coli O6:H1 (strain CFT073 / ATCC 700928 / UPEC).